The following is a 186-amino-acid chain: Apolipophorin-3 (186 aa).

Residues 1–18 form the signal peptide; the sequence is MAAKYVFVVAACSALAQA. Residues 19–23 constitute a propeptide that is removed on maturation; that stretch reads GIVRR.

Belongs to the insect apolipophorin-3 family. As to quaternary structure, equilibrium between a soluble monomer and a bound lipoprotein form. Apolipophorin-3 associates with lipophorin during lipid loading until each particle contains 9 or 14 molecules of apolipophorin-3. In terms of tissue distribution, expressed in hemolymph. Also found in hemocytes and fat body.

Its subcellular location is the secreted. Its function is as follows. Assists in the loading of diacylglycerol, generated from triacylglycerol stores in the fat body through the action of adipokinetic hormone, into lipophorin, the hemolymph lipoprotein. It increases the lipid carrying capacity of lipophorin by covering the expanding hydrophobic surface resulting from diacylglycerol uptake. It thus plays a critical role in the transport of lipids during flight in several species of insects. Has antibacterial activity against the Gram-positive bacteria L.monocytogenes (MIC=6.5 uM). Lacks antibacterial activity against the Gram-positive bacteria B.circulans, M.luteus, S.aureus, and S.lutea, and the Gram-negative bacteria E.coli D31, E.coli ATCC 25922, and S.typhimurium. Lacks antifungal activity against S.cerevisiae, P.pastoris, Z.marxianus, C.albicans, C.wickerhamii, A.niger, F.oxysporum, and T.harizianum. This Galleria mellonella (Greater wax moth) protein is Apolipophorin-3.